A 439-amino-acid polypeptide reads, in one-letter code: Histidine--tRNA ligase (439 aa).

The protein belongs to the class-II aminoacyl-tRNA synthetase family. In terms of assembly, homodimer.

The protein localises to the cytoplasm. The enzyme catalyses tRNA(His) + L-histidine + ATP = L-histidyl-tRNA(His) + AMP + diphosphate + H(+). The polypeptide is Histidine--tRNA ligase (hisS) (Leptospira interrogans serogroup Icterohaemorrhagiae serovar Lai (strain 56601)).